The chain runs to 507 residues: MVTIRADEISNIIRERIEQYNREVTIVNTGTVLQVGDGIARIYGLDEVMAGELVEFAEGTIGIALNLESNNVGVVLMGDGLMIQEGSSVKATGKIAQIPVSEAYLGRVINALANPIDGRGKISASESRLIESPAPGIISRRSVYEPLQTGLIAIDSMIPIGRGQRELIIGDRQTGKTAVATDTILNQQGQNVICVYVAIGQKASSVAQVVTSLQERGAMEYTIVVAETADSPATLQYLAPYTGAALAEYFMYREQHTLIIYDDLSKQAQAYRQMSLLLRRPPGREAYPGDVFYLHSRLLERAAKLSSQLGEGSMTALPIVETQSGDVSAYIPTNVISITDGQIFLSADLFNAGIRPAINVGISVSRVGSAAQIKAMKQVAGKLKLELAQFAELEAFAQFSSDLDKATQNQLARGQRLRELLKQSQSAPLTVEEQIMTIYTGTNGYLDGLEIGQVRKFLVQLRTYLKTNKPQFQEIIASTKTLTAEAESFLKEGIQEQLERFLLQEKL.

Position 170–177 (Gly-170–Thr-177) interacts with ATP. Thr-257 is modified (phosphothreonine).

The protein belongs to the ATPase alpha/beta chains family. F-type ATPases have 2 components, CF(1) - the catalytic core - and CF(0) - the membrane proton channel. CF(1) has five subunits: alpha(3), beta(3), gamma(1), delta(1), epsilon(1). CF(0) has four main subunits: a, b, b' and c.

Its subcellular location is the plastid. It localises to the chloroplast thylakoid membrane. It catalyses the reaction ATP + H2O + 4 H(+)(in) = ADP + phosphate + 5 H(+)(out). Produces ATP from ADP in the presence of a proton gradient across the membrane. The alpha chain is a regulatory subunit. The polypeptide is ATP synthase subunit alpha, chloroplastic (Crucihimalaya wallichii (Rock-cress)).